Reading from the N-terminus, the 594-residue chain is DNA ligase (594 aa).

Glu-280 serves as a coordination point for ATP. The active-site N6-AMP-lysine intermediate is Lys-282. 6 residues coordinate ATP: Arg-287, Arg-316, Glu-345, Phe-385, Arg-456, and Lys-462.

This sequence belongs to the ATP-dependent DNA ligase family. Mg(2+) serves as cofactor.

It carries out the reaction ATP + (deoxyribonucleotide)n-3'-hydroxyl + 5'-phospho-(deoxyribonucleotide)m = (deoxyribonucleotide)n+m + AMP + diphosphate.. DNA ligase that seals nicks in double-stranded DNA during DNA replication, DNA recombination and DNA repair. This is DNA ligase from Halorubrum lacusprofundi (strain ATCC 49239 / DSM 5036 / JCM 8891 / ACAM 34).